The sequence spans 136 residues: ATP synthase epsilon chain, chloroplastic (136 aa).

The protein belongs to the ATPase epsilon chain family. In terms of assembly, F-type ATPases have 2 components, CF(1) - the catalytic core - and CF(0) - the membrane proton channel. CF(1) has five subunits: alpha(3), beta(3), gamma(1), delta(1), epsilon(1). CF(0) has three main subunits: a, b and c.

The protein localises to the plastid. The protein resides in the chloroplast thylakoid membrane. In terms of biological role, produces ATP from ADP in the presence of a proton gradient across the membrane. This Cucumis sativus (Cucumber) protein is ATP synthase epsilon chain, chloroplastic.